The chain runs to 930 residues: Endoplasmic reticulum aminopeptidase 1 (930 aa).

The Cytoplasmic segment spans residues 1–2 (MP). Residues 3 to 23 (SLLPLVLTFLSVSSPSWCQNS) traverse the membrane as a helical; Signal-anchor for type II membrane protein segment. Over 24–930 (DIESLKASNG…WLQKEKPELL (907 aa)) the chain is Lumenal. Asparagine 59 and asparagine 143 each carry an N-linked (GlcNAc...) asparagine glycan. Substrate contacts are provided by residues glutamate 172 and 306 to 310 (GAMEN). Histidine 342 lines the Zn(2+) pocket. Glutamate 343 is an active-site residue. Residues histidine 346 and glutamate 365 each coordinate Zn(2+). A disulfide bridge links cysteine 393 with cysteine 432. N-linked (GlcNAc...) asparagine glycosylation is found at asparagine 403 and asparagine 655. Cysteine 725 and cysteine 732 are joined by a disulfide. N-linked (GlcNAc...) asparagine glycans are attached at residues asparagine 749 and asparagine 890.

The protein belongs to the peptidase M1 family. Monomer. May also exist as a heterodimer; with ERAP2. Interacts with RBMX. Zn(2+) serves as cofactor. Post-translationally, N-glycosylated.

It is found in the endoplasmic reticulum membrane. Functionally, aminopeptidase that plays a central role in peptide trimming, a step required for the generation of most HLA class I-binding peptides. Peptide trimming is essential to customize longer precursor peptides to fit them to the correct length required for presentation on MHC class I molecules. Strongly prefers substrates 9-16 residues long. Rapidly degrades 13-mer to a 9-mer and then stops. Preferentially hydrolyzes the residue Leu and peptides with a hydrophobic C-terminus, while it has weak activity toward peptides with charged C-terminus. May play a role in the inactivation of peptide hormones. May be involved in the regulation of blood pressure through the inactivation of angiotensin II and/or the generation of bradykinin in the kidney. This is Endoplasmic reticulum aminopeptidase 1 (Erap1) from Mus musculus (Mouse).